Reading from the N-terminus, the 147-residue chain is Prefoldin subunit alpha (147 aa).

Belongs to the prefoldin alpha subunit family. In terms of assembly, heterohexamer of two alpha and four beta subunits.

The protein localises to the cytoplasm. Molecular chaperone capable of stabilizing a range of proteins. Seems to fulfill an ATP-independent, HSP70-like function in archaeal de novo protein folding. This is Prefoldin subunit alpha from Saccharolobus islandicus (strain L.S.2.15 / Lassen #1) (Sulfolobus islandicus).